The following is a 421-amino-acid chain: L-evernosamine nitrososynthase (421 aa).

The protein belongs to the acyl-CoA dehydrogenase family. As to quaternary structure, homotetramer. The cofactor is FAD.

It carries out the reaction dTDP-beta-L-evernosamine + 2 NADPH + 2 O2 + H(+) = dTDP-2,3,6-trideoxy-3-C-methyl-4-O-methyl-3-nitroso-beta-L-arabino-hexopyranose + 2 NADP(+) + 3 H2O. The enzyme catalyses dTDP-beta-L-evernosamine + NADPH + O2 = dTDP-N-hydroxy-beta-L-evernosamine + NADP(+) + H2O. It catalyses the reaction dTDP-N-hydroxy-beta-L-evernosamine + NADPH + O2 + H(+) = dTDP-2,3,6-trideoxy-3-C-methyl-4-O-methyl-3-nitroso-beta-L-arabino-hexopyranose + NADP(+) + 2 H2O. The protein operates within antibiotic biosynthesis. Its function is as follows. Nitrososynthase involved in the biosynthesis of everninomicin, a broad spectrum orthosomycin antibiotic. Catalyzes the double-oxidation of TDP-L-evernosamine to TDP-L-evernitrosose. The enzyme first oxidizes the substrate to a transient hydroxylamino intermediate, which is then further oxidized to nitroso sugar. The nitroso group is probably spontaneously oxidized giving TDP-L-evernitrose. In vitro, catalyzes the double-oxidation of TDP-L-epi-vancosamine to TDP-L-epi-vancosonitrose. Can also use biosynthetic progenitors of TDP-L-epi-vancosamine, but progenitors solely undergo single-oxidation reactions and terminate in the hydroxylamine oxidation state. The chain is L-evernosamine nitrososynthase from Micromonospora sp. (strain ATCC 39149 / NRRL 15099 / SCC 1413).